Reading from the N-terminus, the 312-residue chain is uncharacterized protein (312 aa).

The interval 95 to 119 is disordered; the sequence is EKRRENPPKLTLPPLPPPAEERKKP.

The protein localises to the plastid. The protein resides in the chloroplast. This is an uncharacterized protein from Chlamydomonas moewusii (Chlamydomonas eugametos).